The sequence spans 1246 residues: Respiratory nitrate reductase 2 alpha chain (1246 aa).

In terms of domain architecture, 4Fe-4S Mo/W bis-MGD-type spans 43 to 107 (DKIVRSTHGV…SYSWYLYSAN (65 aa)). [4Fe-4S] cluster-binding residues include His-50, Cys-54, Cys-58, and Cys-93. Asp-223 is a binding site for Mo-bis(molybdopterin guanine dinucleotide).

This sequence belongs to the prokaryotic molybdopterin-containing oxidoreductase family. In terms of assembly, tetramer composed of an alpha, a beta and 2 gamma chains. Alpha and beta are catalytic chains; gamma chain is involved in binding the enzyme complex to the cytoplasmic membrane. Requires [4Fe-4S] cluster as cofactor. Mo-bis(molybdopterin guanine dinucleotide) is required as a cofactor.

Its subcellular location is the cell membrane. It carries out the reaction nitrate + a quinol = a quinone + nitrite + H2O. This is a second nitrate reductase enzyme which can substitute for the NRA enzyme and allows E.coli to use nitrate as an electron acceptor during anaerobic growth. In terms of biological role, the alpha chain is the actual site of nitrate reduction. The polypeptide is Respiratory nitrate reductase 2 alpha chain (narZ) (Escherichia coli (strain K12)).